The following is a 131-amino-acid chain: Sulfurtransferase TusD (131 aa).

C81 serves as the catalytic Cysteine persulfide intermediate.

It belongs to the DsrE/TusD family. Heterohexamer, formed by a dimer of trimers. The hexameric TusBCD complex contains 2 copies each of TusB, TusC and TusD. The TusBCD complex interacts with TusE.

The protein resides in the cytoplasm. Part of a sulfur-relay system required for 2-thiolation of 5-methylaminomethyl-2-thiouridine (mnm(5)s(2)U) at tRNA wobble positions. Accepts sulfur from TusA and transfers it in turn to TusE. This chain is Sulfurtransferase TusD, found in Photorhabdus laumondii subsp. laumondii (strain DSM 15139 / CIP 105565 / TT01) (Photorhabdus luminescens subsp. laumondii).